The following is a 65-amino-acid chain: Small ribosomal subunit protein eS27 (65 aa).

C20, C23, C39, and C42 together coordinate Zn(2+). The segment at 20-42 (CIDCGNEQIVFSHPATRVRCNVC) adopts a C4-type zinc-finger fold.

Belongs to the eukaryotic ribosomal protein eS27 family. In terms of assembly, part of the 30S ribosomal subunit. Requires Zn(2+) as cofactor.

In Pyrococcus abyssi (strain GE5 / Orsay), this protein is Small ribosomal subunit protein eS27.